A 147-amino-acid polypeptide reads, in one-letter code: IGCGRGCGGRGYGGLGYGGLGYGGLGYGGLGGGCGRGFSGGGLPVATASAAPTGLGIASENRYEGTVGVCGNLPFLGTAAVAGEFPTVGIGEILYGCGNGAVGITREGGLGYGAGYGGGYGLGYGGYGGGYGLGYGGYGGCGCGCGY.

Positions 1 to 38 (IGCGRGCGGRGYGGLGYGGLGYGGLGYGGLGGGCGRGF) are left arm. A run of 4 repeats spans residues 11 to 15 (GYGGL), 16 to 20 (GYGGL), 21 to 25 (GYGGL), and 26 to 30 (GYGGL). Positions 11–30 (GYGGLGYGGLGYGGLGYGGL) are 4 X 5 AA tandem repeats of G-Y-G-G-L. The segment at 39-107 (SGGGLPVATA…GNGAVGITRE (69 aa)) is central domain. The right arm (Gly-rich tandem repeats) stretch occupies residues 108–147 (GGLGYGAGYGGGYGLGYGGYGGGYGLGYGGYGGCGCGCGY).

The protein belongs to the chorion protein family.

Functionally, this protein is one of many from the eggshell of the silk moth. The sequence is that of Chorion class B protein B.L1 from Bombyx mori (Silk moth).